The sequence spans 206 residues: Triafestin-1 (206 aa).

A signal peptide spans 1-18 (MKTILAVIFFGILAFAFA). N-linked (GlcNAc...) asparagine glycosylation occurs at Asn55.

This sequence belongs to the calycin superfamily. Triabin family. In terms of assembly, interacts with host coagulation factor XII (F12) (inactive and activated) (via amino acids 1-77). Interacts with host high molecular weight kininogen (KNG1) (via amino acids 402-532). Salivary gland (at protein level).

It is found in the secreted. With respect to regulation, zn(2+) modulates binding to host coagulation factor XII (F12) and high molecular weight kininogen (KNG1). In terms of biological role, suppresses activation of the host plasma kallikrein-kinin system, leading to inhibition of the intrinsic coagulation pathway. Blocks host coagulation factor XII (F12) and prekallikrein (KLKB1) reciprocal activation without affecting their amidolytic activities. Blocks binding of host F12 and high molecular weight kininogen (KNG1) to negatively charged surfaces. Attenuates generation of bradykinin by interfering with activation of host kallikrein-kinin system. This Triatoma infestans (Assassin bug) protein is Triafestin-1.